The primary structure comprises 666 residues: Calmodulin-binding receptor kinase CaMRLK (666 aa).

The N-terminal stretch at 1–17 (MFLKLFLLLSLVSFSHS) is a signal peptide. Over 18–297 (DSSSTVSCPN…KTHRTNHTPL (280 aa)) the chain is Extracellular. Residues asparagine 27, asparagine 45, asparagine 52, asparagine 68, asparagine 78, asparagine 89, asparagine 110, asparagine 126, asparagine 137, asparagine 148, asparagine 154, asparagine 189, asparagine 212, asparagine 229, and asparagine 261 are each glycosylated (N-linked (GlcNAc...) asparagine). LRR repeat units follow at residues 79 to 103 (LTRL…LWSM), 105 to 127 (GLVS…PVNG), 130 to 152 (LSAV…FTGF), 153 to 177 (TNLT…SLSG), 178 to 197 (LRHL…PISG), 198 to 224 (LKSL…NLNH), and 226 to 246 (QFLN…KYRK). The chain crosses the membrane as a helical span at residues 298 to 318 (VIGLSSSLGALIIVIFAAAII). The calmodulin binding stretch occupies residues 319 to 337 (LIRRRMKSARTKSRWAISN). At 319-666 (LIRRRMKSAR…LLKDIRTVSR (348 aa)) the chain is on the cytoplasmic side. Residues 395–661 (FGTESVISDG…QQVLGLLKDI (267 aa)) form the Protein kinase domain. ATP contacts are provided by residues 401 to 409 (ISDGTCGPL) and lysine 423.

Belongs to the protein kinase superfamily. Ser/Thr protein kinase family. In terms of assembly, binds calmodulin (CaM) in a calcium-dependent manner. Interacts with CAM1, but not with CAM8. It depends on Mn(2+) as a cofactor. Mg(2+) serves as cofactor. Post-translationally, calmodulin (CaM)-independent autophosphorylation. As to expression, expressed in reproductive and vegetative tissues, with higher levels in seedlings and flowers, but not in leaves.

It localises to the cell membrane. The enzyme catalyses L-seryl-[protein] + ATP = O-phospho-L-seryl-[protein] + ADP + H(+). It catalyses the reaction L-threonyl-[protein] + ATP = O-phospho-L-threonyl-[protein] + ADP + H(+). With respect to regulation, not stimulated by calmodulin (CaM). Functionally, can phosphorylate the myelin basic protein in vitro. Required for endosperm development in embryos. Maybe involved in auxin and osmotic stress responses. The polypeptide is Calmodulin-binding receptor kinase CaMRLK (Arabidopsis thaliana (Mouse-ear cress)).